The following is a 2224-amino-acid chain: Myomegalin (2224 aa).

Coiled coils occupy residues 41–97 (REDV…RQQE), 162–205 (DQYS…LLEE), 236–318 (VSES…REML), and 350–682 (CSQL…ALRQ). Residues 206-236 (PASMEVQPVPKGLPTQQKPDLHETPTTQPPV) are disordered. Polar residues predominate over residues 219–236 (PTQQKPDLHETPTTQPPV). Residues 703–751 (GVTSIGPHHGEQTDQGSMQMPSRDDSTSLTAREEASIPRSTLGDSDTVA) are disordered. The residue at position 705 (T705) is a Phosphothreonine. Residues 724-738 (SRDDSTSLTAREEAS) are compositionally biased toward basic and acidic residues. Coiled-coil stretches lie at residues 745 to 822 (GDSD…QLVD), 856 to 886 (NKRQ…RQLY), and 949 to 986 (AQEM…AGFS). 3 disordered regions span residues 1098–1128 (TGLP…SLPL), 1141–1161 (NKSQ…GSTK), and 1270–1298 (VSPP…DDSS). Residues 1112–1124 (ENTTTARPGSRPQ) show a composition bias toward polar residues. Coiled coils occupy residues 1159–1187 (STKH…SEAT), 1295–1331 (DDSS…LSAT), and 1377–1401 (GLQA…LPKT). Basic and acidic residues predominate over residues 1276 to 1298 (KPLENKPGKQEEFRAHGTPDDSS). The Olduvai domain maps to 1497-1588 (KDHKSEKEEA…DEKKPSPSHS (92 aa)). Disordered stretches follow at residues 1576-1637 (THYD…SLSQ), 1736-1757 (SSGQ…LSSG), 1805-1824 (LSST…QGLE), and 1962-2001 (KASL…LNSP). Residues 1599–1609 (ESSSSPISLPT) are compositionally biased toward polar residues. The span at 1748–1757 (GSVSGELSSG) shows a compositional bias: low complexity. Residues 1769–1958 (GADLLEEHLG…RLQLEQQMDR (190 aa)) are a coiled coil. A coiled-coil region spans residues 2148–2191 (KEGQLMEKELLDLRAQVSQQEQILQNTAARLKRANQRKKSMEQF).

In terms of assembly, interacts with PDE4D. Isoform 2 interacts with MAPRE1 and MAPRE3. Isoform 2 forms a pericentrosomal complex with AKAP9, CDK5RAP2 and EB1/MAPRE1; within this complex, may mediate MAPRE1-binding to CDK5RAP2. Interaction with AKAP9 stabilizes both proteins. Isoform 2 interacts (via N-terminus) with CAMSAP2; this interaction is much stronger in the presence of AKAP9. In complex with AKAP9, Isoform 2 recruits CAMSAP2 to the Golgi apparatus. Isoform 2 interacts with unglycosylated LGALS3BP; this interaction may connect the pericentrosomal complex to the gamma-tubulin ring complex (gamma-TuRC) to promote microtubule assembly and acetylation.

It localises to the cytoplasm. It is found in the cytoskeleton. The protein localises to the microtubule organizing center. Its subcellular location is the centrosome. The protein resides in the golgi apparatus. In terms of biological role, functions as an anchor sequestering components of the cAMP-dependent pathway to Golgi and/or centrosomes. Its function is as follows. Participates in microtubule dynamics, promoting microtubule assembly. Depending upon the cell context, may act at the level of the Golgi apparatus or that of the centrosome. In complex with AKAP9, recruits CAMSAP2 to the Golgi apparatus and tethers non-centrosomal minus-end microtubules to the Golgi, an important step for polarized cell movement. In complex with AKAP9, EB1/MAPRE1 and CDK5RAP2, contributes to microtubules nucleation and extension from the centrosome to the cell periphery, a crucial process for directed cell migration, mitotic spindle orientation and cell-cycle progression. In Mus musculus (Mouse), this protein is Myomegalin (Pde4dip).